We begin with the raw amino-acid sequence, 1793 residues long: Transposon Ty1-H Gag-Pol polyprotein (1793 aa).

Composition is skewed to polar residues over residues 1 to 10 (MESQQLSNYP), 48 to 60 (TKANSQQTTTPAS), and 127 to 152 (QSQFPQYPSSVGTPLSTPSPESGNTF). 3 disordered regions span residues 1–84 (MESQ…QNGP), 126–174 (PQSQ…PPPM), and 390–459 (GSRN…SKST). The span at 153-165 (TDSSSADSDMTST) shows a compositional bias: low complexity. Residues 337 to 439 (NNGIHINNKV…NSKSKTARAH (103 aa)) are RNA-binding. The segment covering 440–456 (NVSTSNNSPSTDNDSIS) has biased composition (low complexity). Aspartate 499 (for protease activity; shared with dimeric partner) is an active-site residue. The tract at residues 621–678 (NVHTSESTRKYPYPFIHRMLAHANAQTIRYSLKNNTITYFNESDVDWSSAIDYQCPDC) is integrase-type zinc finger-like. The 176-residue stretch at 698–873 (NSYEPFQYLH…AGLDISTLLP (176 aa)) folds into the Integrase catalytic domain. The Mg(2+) site is built by aspartate 709 and aspartate 774. The disordered stretch occupies residues 996-1208 (AVSPTDSTPP…SSLGGIGDSN (213 aa)). A compositionally biased stretch (low complexity) spans 998 to 1007 (SPTDSTPPST). Polar residues predominate over residues 1043–1053 (STPQISDIEST). The segment covering 1076–1091 (ESSHASKSKDFRHSDS) has biased composition (basic and acidic residues). Polar residues-rich tracts occupy residues 1092–1120 (YSDNETNHTNVPISSTGGTNNKTVPQTSE) and 1133–1144 (SIDTSSSESNSL). Residues 1216–1250 (KKRSLEDNETEIKVSRDTWNTKNMRSLEPPRSKKR) carry the Bipartite nuclear localization signal motif. In terms of domain architecture, Reverse transcriptase Ty1/copia-type spans 1376–1514 (NNYYITQLDI…DILGLEIKYQ (139 aa)). Residues aspartate 1384, aspartate 1465, aspartate 1466, aspartate 1648, glutamate 1690, and aspartate 1723 each contribute to the Mg(2+) site. An RNase H Ty1/copia-type domain is found at 1648–1790 (DASYGNQPYY…IKTFKLLTNK (143 aa)).

The capsid protein forms a homotrimer, from which the VLPs are assembled. The protease is a homodimer, whose active site consists of two apposed aspartic acid residues. Initially, virus-like particles (VLPs) are composed of the structural unprocessed proteins Gag and Gag-Pol, and also contain the host initiator methionine tRNA (tRNA(i)-Met) which serves as a primer for minus-strand DNA synthesis, and a dimer of genomic Ty RNA. Processing of the polyproteins occurs within the particle and proceeds by an ordered pathway, called maturation. First, the protease (PR) is released by autocatalytic cleavage of the Gag-Pol polyprotein yielding capsid protein p45 and a Pol-p154 precursor protein. This cleavage is a prerequisite for subsequent processing of Pol-p154 at the remaining sites to release the mature structural and catalytic proteins. Maturation takes place prior to the RT reaction and is required to produce transposition-competent VLPs.

Its subcellular location is the cytoplasm. The protein localises to the nucleus. The enzyme catalyses DNA(n) + a 2'-deoxyribonucleoside 5'-triphosphate = DNA(n+1) + diphosphate. It catalyses the reaction Endonucleolytic cleavage to 5'-phosphomonoester.. Its function is as follows. Capsid protein (CA) is the structural component of the virus-like particle (VLP), forming the shell that encapsulates the retrotransposons dimeric RNA genome. The particles are assembled from trimer-clustered units and there are holes in the capsid shells that allow for the diffusion of macromolecules. CA also has nucleocapsid-like chaperone activity, promoting primer tRNA(i)-Met annealing to the multipartite primer-binding site (PBS), dimerization of Ty1 RNA and initiation of reverse transcription. In terms of biological role, the aspartyl protease (PR) mediates the proteolytic cleavages of the Gag and Gag-Pol polyproteins after assembly of the VLP. Functionally, reverse transcriptase/ribonuclease H (RT) is a multifunctional enzyme that catalyzes the conversion of the retro-elements RNA genome into dsDNA within the VLP. The enzyme displays a DNA polymerase activity that can copy either DNA or RNA templates, and a ribonuclease H (RNase H) activity that cleaves the RNA strand of RNA-DNA heteroduplexes during plus-strand synthesis and hydrolyzes RNA primers. The conversion leads to a linear dsDNA copy of the retrotransposon that includes long terminal repeats (LTRs) at both ends. Integrase (IN) targets the VLP to the nucleus, where a subparticle preintegration complex (PIC) containing at least integrase and the newly synthesized dsDNA copy of the retrotransposon must transit the nuclear membrane. Once in the nucleus, integrase performs the integration of the dsDNA into the host genome. In Saccharomyces cerevisiae (strain ATCC 204508 / S288c) (Baker's yeast), this protein is Transposon Ty1-H Gag-Pol polyprotein (TY1B-H).